The chain runs to 306 residues: Ribosomal protein L11 methyltransferase (306 aa).

The S-adenosyl-L-methionine site is built by T154, G179, D201, and N242.

The protein belongs to the methyltransferase superfamily. PrmA family.

It localises to the cytoplasm. The enzyme catalyses L-lysyl-[protein] + 3 S-adenosyl-L-methionine = N(6),N(6),N(6)-trimethyl-L-lysyl-[protein] + 3 S-adenosyl-L-homocysteine + 3 H(+). Its function is as follows. Methylates ribosomal protein L11. The protein is Ribosomal protein L11 methyltransferase of Xanthomonas axonopodis pv. citri (strain 306).